The chain runs to 325 residues: Probable pectate lyase B (325 aa).

The first 15 residues, 1–15, serve as a signal peptide directing secretion; that stretch reads MRLPTLFMLAAIATA. 3 residues coordinate Ca(2+): aspartate 132, aspartate 161, and aspartate 165. Arginine 218 is a catalytic residue.

The protein belongs to the polysaccharide lyase 1 family. It depends on Ca(2+) as a cofactor.

The protein resides in the secreted. The enzyme catalyses Eliminative cleavage of (1-&gt;4)-alpha-D-galacturonan to give oligosaccharides with 4-deoxy-alpha-D-galact-4-enuronosyl groups at their non-reducing ends.. Its function is as follows. Pectinolytic enzyme consist of four classes of enzymes: pectin lyase, polygalacturonase, pectin methylesterase and rhamnogalacturonase. Among pectinolytic enzymes, pectin lyase is the most important in depolymerization of pectin, since it cleaves internal glycosidic bonds of highly methylated pectins. Favors pectate, the anion, over pectin, the methyl ester. In Aspergillus terreus (strain NIH 2624 / FGSC A1156), this protein is Probable pectate lyase B (plyB).